The chain runs to 487 residues: RCC1 repeat-containing protein DDB_G0284033 (487 aa).

RCC1 repeat units follow at residues 66–127 (SNKV…FSGY), 207–259 (RSLI…ALSN), 260–313 (DGKL…ALTS), 373–426 (NGNI…IVET), and 428–483 (DGRF…SLNS).

The protein is RCC1 repeat-containing protein DDB_G0284033 of Dictyostelium discoideum (Social amoeba).